Here is a 481-residue protein sequence, read N- to C-terminus: UDP-glucose 6-dehydrogenase 1 (481 aa).

NAD(+) contacts are provided by residues 8–13 (GAGYVG), Asp33, Arg38, 86–90 (VNTPT), 127–128 (ST), and Glu162. Substrate contacts are provided by residues 158-162 (EFLAE), 217-224 (KLAANAFL), and 257-270 (RIGA…VGFG). Cys273 acts as the Nucleophile in catalysis. 273 to 276 (CFQK) serves as a coordination point for NAD(+). Residue 335 to 336 (FK) participates in substrate binding. Arg343 is a binding site for NAD(+). Ser394 carries the post-translational modification Phosphoserine. Residue Arg448 participates in substrate binding.

The protein belongs to the UDP-glucose/GDP-mannose dehydrogenase family.

The enzyme catalyses UDP-alpha-D-glucose + 2 NAD(+) + H2O = UDP-alpha-D-glucuronate + 2 NADH + 3 H(+). It functions in the pathway nucleotide-sugar biosynthesis; UDP-alpha-D-glucuronate biosynthesis; UDP-alpha-D-glucuronate from UDP-alpha-D-glucose: step 1/1. In terms of biological role, involved in the biosynthesis of UDP-glucuronic acid (UDP-GlcA), providing nucleotide sugars for cell-wall polymers. This chain is UDP-glucose 6-dehydrogenase 1 (UGD1), found in Oryza sativa subsp. japonica (Rice).